Reading from the N-terminus, the 91-residue chain is Acylphosphatase (91 aa).

In terms of domain architecture, Acylphosphatase-like spans 5-91 (CLHAYVGGRV…QGIAGFVVRR (87 aa)). Active-site residues include R20 and N38.

It belongs to the acylphosphatase family.

It catalyses the reaction an acyl phosphate + H2O = a carboxylate + phosphate + H(+). In Pseudomonas aeruginosa (strain ATCC 15692 / DSM 22644 / CIP 104116 / JCM 14847 / LMG 12228 / 1C / PRS 101 / PAO1), this protein is Acylphosphatase (acyP).